A 310-amino-acid chain; its full sequence is MTDIRITGIPKEAGFGDYVALLKPRVMSLVVFTALVGLLVAPVTVHPMIALTGILFIALGAGASGALNMWWDEDIDRVMKRTRNRPVPSGIVAPGEALGIGLALSGIAVVMLGLATNLFAAGLLAFTIFFYAVVYSMWLKRTTPQNIVIGGAAGAFPPMIGWAVATGGVSVESLFMFALIFMWTPPHFWSLALFMKSDYSDAGVPMLTVTHGRRVTRAHVLVYSLLLAPLAVAGAFTGIGGPLYLATALALNGWLLVGAVRIWRRDEAQAEADRYRVEKGFFRFSLYYLFLHFGAILAEAALKPYGLGGW.

The next 9 membrane-spanning stretches (helical) occupy residues 21–43, 48–70, 95–115, 118–138, 147–167, 174–194, 220–240, 243–263, and 289–309; these read LLKPRVMSLVVFTALVGLLVAPV, MIALTGILFIALGAGASGALNMW, GEALGIGLALSGIAVVMLGLA, LFAAGLLAFTIFFYAVVYSMW, IVIGGAAGAFPPMIGWAVATG, LFMFALIFMWTPPHFWSLALF, VLVYSLLLAPLAVAGAFTGIG, LYLATALALNGWLLVGAVRIW, and LFLHFGAILAEAALKPYGLGG.

It belongs to the UbiA prenyltransferase family. Protoheme IX farnesyltransferase subfamily. In terms of assembly, interacts with CtaA.

The protein resides in the cell inner membrane. The enzyme catalyses heme b + (2E,6E)-farnesyl diphosphate + H2O = Fe(II)-heme o + diphosphate. It participates in porphyrin-containing compound metabolism; heme O biosynthesis; heme O from protoheme: step 1/1. Converts heme B (protoheme IX) to heme O by substitution of the vinyl group on carbon 2 of heme B porphyrin ring with a hydroxyethyl farnesyl side group. The protein is Protoheme IX farnesyltransferase of Cereibacter sphaeroides (strain KD131 / KCTC 12085) (Rhodobacter sphaeroides).